The chain runs to 258 residues: Membrane-associated protein Vipp1 (258 aa).

A disordered region spans residues 217-258; the sequence is MLPPATPVTQAQLPPQQETTPAKSNEVVDAELDSLRKQLDQL. Residues 223–239 show a composition bias toward polar residues; the sequence is PVTQAQLPPQQETTPAK. Residues 249–258 show a composition bias toward basic and acidic residues; it reads DSLRKQLDQL.

This sequence belongs to the PspA/Vipp/IM30 family. As to quaternary structure, polymerizes to form rings, filaments and ribbons. Rings are formed by stacked rungs that tilt to give a dome-shaped curvature. Rings form with symmetries ranging from C11 (55 subunits) to C17 (119 subunits).

The protein resides in the cell inner membrane. In terms of biological role, a membrane remodeling protein capable of forming rings and/or filaments on membranes, which then curve and tubulate the bilayer. Rings will form on liposomes, altering their positive curvature so the lipid bilayer is remodeled into a negative curve as the membrane enters the ring. Ring stacks of varying lengths can be seen joining isolated liposomes. A lipid monolayer can be drawn into the center of the rings. Required for thylakoid formation. This is Membrane-associated protein Vipp1 from Nostoc punctiforme (strain ATCC 29133 / PCC 73102).